The sequence spans 403 residues: Aminomethyltransferase, mitochondrial (403 aa).

The N-terminal 28 residues, 1-28, are a transit peptide targeting the mitochondrion; that stretch reads MHRIVSVVAPLGFRLQAQPLVQSRPLSS. Substrate-binding residues include Glu-232 and Arg-261. Lys-368 is subject to N6-succinyllysine. A substrate-binding site is contributed by Tyr-399.

The protein belongs to the GcvT family. As to quaternary structure, the glycine cleavage system is composed of four proteins: P, T, L and H.

It is found in the mitochondrion. It carries out the reaction N(6)-[(R)-S(8)-aminomethyldihydrolipoyl]-L-lysyl-[protein] + (6S)-5,6,7,8-tetrahydrofolate = N(6)-[(R)-dihydrolipoyl]-L-lysyl-[protein] + (6R)-5,10-methylene-5,6,7,8-tetrahydrofolate + NH4(+). Its function is as follows. The glycine cleavage system catalyzes the degradation of glycine. The sequence is that of Aminomethyltransferase, mitochondrial from Mus musculus (Mouse).